A 299-amino-acid chain; its full sequence is Formamidopyrimidine-DNA glycosylase (299 aa).

Pro-2 functions as the Schiff-base intermediate with DNA in the catalytic mechanism. Glu-3 (proton donor) is an active-site residue. The Proton donor; for beta-elimination activity role is filled by Lys-58. Residues His-106, Arg-125, and Lys-168 each contribute to the DNA site. An FPG-type zinc finger spans residues 259–295; sequence RVYDRVGHACPTKGCTGRVGRIVQGGRSTFFCETCQV. Residue Arg-285 is the Proton donor; for delta-elimination activity of the active site.

The protein belongs to the FPG family. Monomer. Zn(2+) serves as cofactor.

It catalyses the reaction Hydrolysis of DNA containing ring-opened 7-methylguanine residues, releasing 2,6-diamino-4-hydroxy-5-(N-methyl)formamidopyrimidine.. It carries out the reaction 2'-deoxyribonucleotide-(2'-deoxyribose 5'-phosphate)-2'-deoxyribonucleotide-DNA = a 3'-end 2'-deoxyribonucleotide-(2,3-dehydro-2,3-deoxyribose 5'-phosphate)-DNA + a 5'-end 5'-phospho-2'-deoxyribonucleoside-DNA + H(+). Functionally, involved in base excision repair of DNA damaged by oxidation or by mutagenic agents. Acts as a DNA glycosylase that recognizes and removes damaged bases. Has a preference for oxidized purines, such as 7,8-dihydro-8-oxoguanine (8-oxoG). Has AP (apurinic/apyrimidinic) lyase activity and introduces nicks in the DNA strand. Cleaves the DNA backbone by beta-delta elimination to generate a single-strand break at the site of the removed base with both 3'- and 5'-phosphates. This chain is Formamidopyrimidine-DNA glycosylase, found in Methylorubrum extorquens (strain CM4 / NCIMB 13688) (Methylobacterium extorquens).